The following is a 148-amino-acid chain: Large ribosomal subunit protein uL11 (148 aa).

A disordered region spans residues 89–108; that stretch reads EKKKGSGAHKPGKEKVGQVT.

It belongs to the universal ribosomal protein uL11 family. Part of the ribosomal stalk of the 50S ribosomal subunit. Interacts with L10 and the large rRNA to form the base of the stalk. L10 forms an elongated spine to which L12 dimers bind in a sequential fashion forming a multimeric L10(L12)X complex. In terms of processing, one or more lysine residues are methylated.

Its function is as follows. Forms part of the ribosomal stalk which helps the ribosome interact with GTP-bound translation factors. The sequence is that of Large ribosomal subunit protein uL11 from Anaeromyxobacter dehalogenans (strain 2CP-1 / ATCC BAA-258).